A 31-amino-acid polypeptide reads, in one-letter code: Cytochrome b6-f complex subunit 6 (31 aa).

A helical membrane pass occupies residues 4–26 (ITSYFGFLLAASTITPALLIGLS).

The protein belongs to the PetL family. The 4 large subunits of the cytochrome b6-f complex are cytochrome b6, subunit IV (17 kDa polypeptide, PetD), cytochrome f and the Rieske protein, while the 4 small subunits are PetG, PetL, PetM and PetN. The complex functions as a dimer.

The protein resides in the plastid. The protein localises to the chloroplast thylakoid membrane. Component of the cytochrome b6-f complex, which mediates electron transfer between photosystem II (PSII) and photosystem I (PSI), cyclic electron flow around PSI, and state transitions. PetL is important for photoautotrophic growth as well as for electron transfer efficiency and stability of the cytochrome b6-f complex. The chain is Cytochrome b6-f complex subunit 6 from Illicium oligandrum (Star anise).